A 99-amino-acid polypeptide reads, in one-letter code: Acylphosphatase (99 aa).

Positions 11–97 (ARRIHVKGKV…VVAQGFTQKP (87 aa)) constitute an Acylphosphatase-like domain. Active-site residues include R26 and N44.

It belongs to the acylphosphatase family.

It catalyses the reaction an acyl phosphate + H2O = a carboxylate + phosphate + H(+). This chain is Acylphosphatase (acyP), found in Rhizorhabdus wittichii (strain DSM 6014 / CCUG 31198 / JCM 15750 / NBRC 105917 / EY 4224 / RW1) (Sphingomonas wittichii).